A 251-amino-acid chain; its full sequence is Hydroxyacylglutathione hydrolase (251 aa).

Residues His53, His55, Asp57, His58, His109, Asp126, and His164 each coordinate Zn(2+).

The protein belongs to the metallo-beta-lactamase superfamily. Glyoxalase II family. In terms of assembly, monomer. It depends on Zn(2+) as a cofactor.

It carries out the reaction an S-(2-hydroxyacyl)glutathione + H2O = a 2-hydroxy carboxylate + glutathione + H(+). The protein operates within secondary metabolite metabolism; methylglyoxal degradation; (R)-lactate from methylglyoxal: step 2/2. Its function is as follows. Thiolesterase that catalyzes the hydrolysis of S-D-lactoyl-glutathione to form glutathione and D-lactic acid. This is Hydroxyacylglutathione hydrolase from Wigglesworthia glossinidia brevipalpis.